A 665-amino-acid chain; its full sequence is Protein kinase domain-containing protein ppk2 (665 aa).

Disordered regions lie at residues 42-63, 82-152, 187-217, and 286-343; these read PNDS…KKKF, GNST…LSRS, LNSQ…SSMN, and AESL…VGHP. Positions 82-104 are enriched in polar residues; it reads GNSTRSPPFHLQNQKSNGQSEVW. Low complexity-rich tracts occupy residues 137–152 and 206–217; these read SLSR…LSRS and TNRLSSSTSSMN. Residues 294–316 show a composition bias toward polar residues; the sequence is SATTIQQGDVSSYPLSRSVSTPV. Phosphoserine is present on Ser358. One can recognise a Protein kinase domain in the interval 388–637; sequence YTDFTKICQQ…NMLLETSSFL (250 aa). ATP is bound by residues 394–402 and Lys417; that span reads ICQQDTVGT.

Its subcellular location is the cytoplasm. The protein is Protein kinase domain-containing protein ppk2 (ppk2) of Schizosaccharomyces pombe (strain 972 / ATCC 24843) (Fission yeast).